The following is a 933-amino-acid chain: Potassium voltage-gated channel subfamily KQT member 5 (933 aa).

The Cytoplasmic segment spans residues 1-126 (MPRHHAGGEE…YNVLERPRGW (126 aa)). S89 carries the phosphoserine modification. The chain crosses the membrane as a helical span at residues 127 to 147 (AFVYHAFVFLLVFGCLILSVF). At 148–157 (STIPEHTKLA) the chain is on the extracellular side. A helical membrane pass occupies residues 158 to 178 (SSCLLILEFVMIVVFGLEFII). The Cytoplasmic segment spans residues 179 to 201 (RIWSAGCCCRYRGWQGRLRFARK). A helical transmembrane segment spans residues 202–222 (PFCVIDTIVLIASIAVVSAKT). Over 223–230 (QGNIFATS) the chain is Extracellular. Residues 231–253 (ALRSLRFLQILRMVRMDRRGGTW) form a helical; Voltage-sensor membrane-spanning segment. R249 and K265 together coordinate a 1,2-diacyl-sn-glycero-3-phospho-(1D-myo-inositol-4,5-bisphosphate). At 254 to 267 (KLLGSVVYAHSKEL) the chain is on the cytoplasmic side. A helical transmembrane segment spans residues 268-288 (ITAWYIGFLVLIFSSFLVYLV). Topologically, residues 289–299 (EKDANKEFSTY) are extracellular. An intramembrane region (pore-forming) is located at residues 300–320 (ADALWWGTITLTTIGYGDKTP). Topologically, residues 321 to 326 (LTWLGR) are extracellular. A helical transmembrane segment spans residues 327-347 (LLSAGFALLGISFFALPAGIL). Residues 348–933 (GSGFALKVQE…ALSLPHVKLN (586 aa)) lie on the Cytoplasmic side of the membrane. K362 lines the a 1,2-diacyl-sn-glycero-3-phospho-(1D-myo-inositol-4,5-bisphosphate) pocket. The tract at residues 371-379 (AANLIQCVW) is interaction with CALM. The disordered stretch occupies residues 405–465 (SPTKKEQGEA…EGSPTKVQKS (61 aa)). Residues 432 to 441 (RGQSIKSRQA) are compositionally biased toward polar residues. S448 carries the post-translational modification Phosphoserine. Residues 522–529 (VIRAIRIM) form an interaction with CALM region. The interval 578–598 (KGQMTSDKKSREKITAEHETT) is disordered. Residues 583-598 (SDKKSREKITAEHETT) are compositionally biased toward basic and acidic residues. Residue S832 is modified to Phosphoserine. The interval 878–933 (GAEETETDTFDGTPPPAGEAAFSSDSLRTGRSRSSQNICKTGDSTDALSLPHVKLN) is disordered. The span at 900–924 (SSDSLRTGRSRSSQNICKTGDSTDA) shows a compositional bias: polar residues.

It belongs to the potassium channel family. KQT (TC 1.A.1.15) subfamily. Kv7.5/KCNQ5 sub-subfamily. As to quaternary structure, homotetramer; forms a functional homotetrameric channel resulting in the expression of a small M-current. Heterotetramer with KCNQ3; forms heterotetrameric M-channel responsible for the native M-current. Heterotetramer with KCNQ1; forms a functional voltage-gated potassium channel. Interacts (via C-terminus) with calmodulin/CALM; forms a heterooctameric structure (with 4:4 KCNQ1:CALM stoichiometry); the interaction is calcium-independent, constitutive and participates in the channel function. Strongly expressed in brain. Also expressed in colon, lung and uterus.

It localises to the cell membrane. The catalysed reaction is K(+)(in) = K(+)(out). Phosphatidylinositol-4,5-bisphosphate (PIP2) is essential to activate KCNQ5 channel by inducing the coupling of the voltage-sensing domain (VSD) and the pore-forming domain (PD). Calcium suppresses KCNQ5 channel current through calcium-bound CALM C-terminus. Therefore CALM acts as calcium sensor that controls channel activity. Zinc potentiates channel activity in a pH-dependent manner. The activity is modulated by small changes in cell volume. Activated by the anticonvulsant retigabine. Inhibited by linopirdine and XE991. Pore-forming subunit of the voltage-gated potassium (Kv) channel broadly expressed in brain and skeletal muscle and involved in the regulation of neuronal excitability. Associates with KCNQ3/Kv7.3 pore-forming subunit to form a potassium channel which contributes to M-type current, a slowly activating and deactivating potassium conductance which plays a critical role in determining the subthreshold electrical excitability of neurons. Contributes, with other potassium channels, to the molecular diversity of a heterogeneous population of M-channels, varying in kinetic and pharmacological properties, which underlie this physiologically important current. Also forms a functional channel with KCNQ1/Kv7.1 subunit that may contribute to vasoconstriction and hypertension. Channel may be selectively permeable in vitro to other cations besides potassium, in decreasing order of affinity K(+) = Rb(+) &gt; Cs(+) &gt; Na(+). In Mus musculus (Mouse), this protein is Potassium voltage-gated channel subfamily KQT member 5.